The sequence spans 351 residues: METNYSIPLNGSDVVIYDSTISRVLWILSMVVVSITFFLGVLGNGLVIWVAGFRMPHTVTTIWYLNLALADFSFTATLPFLLVEMAMKEKWPFGWFLCKLVHIAVDVNLFGSVFLIAVIALDRCICVLHPVWAQNHRTVSLARNVVVGSWIFALILTLPLFLFLTTVRDARGDVHCRLSFVSWGNSVEERLNTAITFVTTRGIIRFIVSFSLPMSFVAICYGLITTKIHKKAFVNSSRPFRVLTGVVASFFICWFPFQLVALLGTVWLKEMQFSGSYKIIGRLVNPTSSLAFFNSCLNPILYVFMGQDFQERLIHSLSSRLQRALSEDSGHISDTRTNLASLPEDIEIKAI.

The Extracellular portion of the chain corresponds to 1–27 (METNYSIPLNGSDVVIYDSTISRVLWI). 2 N-linked (GlcNAc...) asparagine glycosylation sites follow: N4 and N10. The helical transmembrane segment at 28–50 (LSMVVVSITFFLGVLGNGLVIWV) threads the bilayer. Residues 51-61 (AGFRMPHTVTT) are Cytoplasmic-facing. A helical membrane pass occupies residues 62–83 (IWYLNLALADFSFTATLPFLLV). The Extracellular segment spans residues 84-100 (EMAMKEKWPFGWFLCKL). A disulfide bridge connects residues C98 and C176. The helical transmembrane segment at 101-121 (VHIAVDVNLFGSVFLIAVIAL) threads the bilayer. Topologically, residues 122–140 (DRCICVLHPVWAQNHRTVS) are cytoplasmic. A helical membrane pass occupies residues 141–162 (LARNVVVGSWIFALILTLPLFL). Topologically, residues 163–205 (FLTTVRDARGDVHCRLSFVSWGNSVEERLNTAITFVTTRGIIR) are extracellular. A helical membrane pass occupies residues 206–226 (FIVSFSLPMSFVAICYGLITT). The Cytoplasmic segment spans residues 227 to 242 (KIHKKAFVNSSRPFRV). A helical membrane pass occupies residues 243-266 (LTGVVASFFICWFPFQLVALLGTV). Residues 267 to 286 (WLKEMQFSGSYKIIGRLVNP) are Extracellular-facing. The helical transmembrane segment at 287–306 (TSSLAFFNSCLNPILYVFMG) threads the bilayer. At 307–351 (QDFQERLIHSLSSRLQRALSEDSGHISDTRTNLASLPEDIEIKAI) the chain is on the cytoplasmic side.

It belongs to the G-protein coupled receptor 1 family. As to expression, expressed exclusively in vomeronasal neurons. Expressed in 0.6 % of a subset of sensory neurons located in the basal layer of the vomeronasal organ. Each neuron appears to express only one receptor gene. Expressed mostly in neutrophils, followed by spleen and lung and expressed at very low levels in heart and liver.

The protein localises to the cell membrane. In terms of biological role, low affinity receptor for N-formyl-methionyl peptides. Receptor for lipoxin A4. May have an olfactory function associated with the identification of pathogens or of pathogenic states. The sequence is that of Formyl peptide receptor-related sequence 1 (Fpr-s1) from Mus musculus (Mouse).